Here is a 218-residue protein sequence, read N- to C-terminus: Peptidyl-tRNA hydrolase (218 aa).

A tRNA-binding site is contributed by tyrosine 19. Histidine 24 serves as the catalytic Proton acceptor. TRNA is bound by residues tyrosine 68, asparagine 70, and asparagine 116. Residues 181 to 218 (WNTATQRLNARPAPPKPPKAPKAPQPAAADQPKDESQP) form a disordered region. The segment covering 192–204 (PAPPKPPKAPKAP) has biased composition (pro residues).

The protein belongs to the PTH family. As to quaternary structure, monomer.

The protein localises to the cytoplasm. The enzyme catalyses an N-acyl-L-alpha-aminoacyl-tRNA + H2O = an N-acyl-L-amino acid + a tRNA + H(+). In terms of biological role, hydrolyzes ribosome-free peptidyl-tRNAs (with 1 or more amino acids incorporated), which drop off the ribosome during protein synthesis, or as a result of ribosome stalling. Functionally, catalyzes the release of premature peptidyl moieties from peptidyl-tRNA molecules trapped in stalled 50S ribosomal subunits, and thus maintains levels of free tRNAs and 50S ribosomes. The sequence is that of Peptidyl-tRNA hydrolase from Azoarcus sp. (strain BH72).